Here is a 105-residue protein sequence, read N- to C-terminus: NADH-quinone oxidoreductase subunit K (105 aa).

3 helical membrane passes run 8 to 28 (VTNGLIFSTLLFVISVAGIII), 33 to 53 (ILILLMSIELMLLAVNTNFLI), and 65 to 85 (VFVFFIMAVAAAETAIGLAIV).

This sequence belongs to the complex I subunit 4L family. In terms of assembly, NDH-1 is composed of 14 different subunits. Subunits NuoA, H, J, K, L, M, N constitute the membrane sector of the complex.

Its subcellular location is the cell inner membrane. It carries out the reaction a quinone + NADH + 5 H(+)(in) = a quinol + NAD(+) + 4 H(+)(out). In terms of biological role, NDH-1 shuttles electrons from NADH, via FMN and iron-sulfur (Fe-S) centers, to quinones in the respiratory chain. The immediate electron acceptor for the enzyme in this species is believed to be ubiquinone. Couples the redox reaction to proton translocation (for every two electrons transferred, four hydrogen ions are translocated across the cytoplasmic membrane), and thus conserves the redox energy in a proton gradient. This Francisella philomiragia subsp. philomiragia (strain ATCC 25017 / CCUG 19701 / FSC 153 / O#319-036) protein is NADH-quinone oxidoreductase subunit K.